The following is a 752-amino-acid chain: MAP/microtubule affinity-regulating kinase 4 (752 aa).

The tract at residues 1–36 (MSSRTALAPGNDRNSDTHGTLGSGRSSDKGPSWSSR) is disordered. Positions 59 to 310 (YRLLRTIGKG…LEQIMKDKWI (252 aa)) constitute a Protein kinase domain. Residues 65–73 (IGKGNFAKV) and K88 contribute to the ATP site. The active-site Proton acceptor is D181. At T214 the chain carries Phosphothreonine; by LKB1. Residues 324 to 368 (EPEEDFGDTKRIEVMVGMGYTREEIKEALTNQKYNEVTATYLLLG) form the UBA domain. Positions 385-615 (ARVRAPSDTT…SGRPRPTTNL (231 aa)) are disordered. Positions 391–406 (SDTTNGTSSSKGSSHN) are enriched in low complexity. 2 positions are modified to phosphoserine: S423 and S543. Low complexity predominate over residues 544 to 553 (PSSHSLAPPS). Residues 703–752 (AGGPEPLSHFEVEVCQLPRPGLRGVLFRRVAGTALAFRTLVTRISNDLEL) form the KA1 domain.

This sequence belongs to the protein kinase superfamily. CAMK Ser/Thr protein kinase family. SNF1 subfamily. As to quaternary structure, interacts with MAPT/TAU. Interacts with gamma-tubulin. Interacts with ODF2. Interacts with USP9X. Interacts with YWHAQ. Interacts with NLRP3; promoting NLRP3 recruitment to microtubule organizing center (MTOC). It depends on Mg(2+) as a cofactor. Ubiquitinated with 'Lys-29'- and 'Lys-33'-linked polyubiquitins which appear to impede LKB1-mediated phosphorylation. Deubiquitinated by USP9X. Post-translationally, phosphorylated at Thr-214 by STK11/LKB1 in complex with STE20-related adapter-alpha (STRADA) pseudo kinase and CAB39. Phosphorylated throughout the cell cycle. Isoform 1 and isoform 2 show similar expression patterns in the central nervous system and are present in the same subsets of neurons including pyramidal and non-pyramidal neurons in the cerebral cortex and hippocampus, cerebellar Purkinje cells, and interneurons and motor neurons in the spinal cord but not in glial cells (at protein level). Isoform 2 is the major isoform in brain and cerebellum. Also expressed in spleen, liver, small intestine, colon, kidney, tongue, testis and lung. Isoform 1 and isoform 2 are expressed at similar levels in heart.

Its subcellular location is the cytoplasm. The protein localises to the cytoskeleton. It localises to the microtubule organizing center. It is found in the centrosome. The protein resides in the cilium axoneme. Its subcellular location is the cilium basal body. The protein localises to the cell projection. It localises to the dendrite. The enzyme catalyses L-seryl-[protein] + ATP = O-phospho-L-seryl-[protein] + ADP + H(+). It carries out the reaction L-threonyl-[protein] + ATP = O-phospho-L-threonyl-[protein] + ADP + H(+). Its activity is regulated as follows. Activated by phosphorylation on Thr-214. Serine/threonine-protein kinase. Phosphorylates the microtubule-associated protein MAPT/TAU. Also phosphorylates the microtubule-associated proteins MAP2 and MAP4. Involved in regulation of the microtubule network, causing reorganization of microtubules into bundles. Required for the initiation of axoneme extension during cilium assembly. Regulates the centrosomal location of ODF2 and phosphorylates ODF2 in vitro. Plays a role in cell cycle progression, specifically in the G1/S checkpoint. Reduces neuronal cell survival. Plays a role in energy homeostasis by regulating satiety and metabolic rate. Promotes adipogenesis by activating JNK1 and inhibiting the p38MAPK pathway, and triggers apoptosis by activating the JNK1 pathway. Phosphorylates mTORC1 complex member RPTOR and acts as a negative regulator of the mTORC1 complex, probably due to disruption of the interaction between phosphorylated RPTOR and the RRAGA/RRAGC heterodimer which is required for mTORC1 activation. Involved in NLRP3 positioning along microtubules by mediating NLRP3 recruitment to microtubule organizing center (MTOC) upon inflammasome activation. This chain is MAP/microtubule affinity-regulating kinase 4, found in Mus musculus (Mouse).